The primary structure comprises 181 residues: ADP-ribosylation factor 1 (181 aa).

Residue G2 is modified to N-acetylglycine; alternate. The N-myristoyl glycine; alternate moiety is linked to residue G2. Residues 3–16 are important for the stable binding to the membranes; sequence NIFANLFKGLFGKK. Residues 24–32, 126–129, and A160 contribute to the GTP site; these read GLDAAGKTT and NKQD.

The protein belongs to the small GTPase superfamily. Arf family. Interacts (when activated) with GGA1, GGA2 and GGA3; the interaction is required for proper subcellular location of GGA1, GGA2 and GGA3. Interacts with ARHGAP21, ASAP2, GGA1, HERC1, PRKCABP, PIP5K1B, TMED2, PSCD2, TMED10 and GRIA2. Interacts with ARFGAP1, which hydrolyzes GTP and thus, regulates its function. Interacts with PI4KB in the Golgi complex. Interacts with NCS1/FREQ in the Golgi and at the plasma membrane. Interacts with PLEKHA3. Interacts with PLEKHA8; the interaction, together with phosphatidylinositol 4-phosphate binding, is required for FAPP2-mediated glucosylceramide transfer activity. Interacts (activated) with PICK1 (via PDZ domain); the interaction blocks Arp2/3 complex inhibition. Interacts with IQSEC1. Interacts with C9orf72.

The protein resides in the golgi apparatus membrane. Its subcellular location is the synapse. It is found in the synaptosome. The protein localises to the postsynaptic density. It carries out the reaction GTP + H2O = GDP + phosphate + H(+). Alternates between an inactive GDP-bound form and an active GTP-bound form. Activated by guanine nucleotide-exchange factors (GEFs) and inactivated by GTPase-activating proteins (GAPs). Small GTPase involved in protein trafficking between different compartments. Modulates vesicle budding and uncoating within the Golgi complex. In its GTP-bound form, triggers the recruitment of coatomer proteins to the Golgi membrane. The hydrolysis of ARF1-bound GTP, which is mediated by ARFGAPs proteins, is required for dissociation of coat proteins from Golgi membranes and vesicles. The GTP-bound form interacts with PICK1 to limit PICK1-mediated inhibition of Arp2/3 complex activity; the function is linked to AMPA receptor (AMPAR) trafficking, regulation of synaptic plasticity of excitatory synapses and spine shrinkage during long-term depression (LTD). Plays a key role in the regulation of intestinal stem cells and gut microbiota, and is essential for maintaining intestinal homeostasis. Also plays a critical role in mast cell expansion but not in mast cell maturation by facilitating optimal mTORC1 activation. This chain is ADP-ribosylation factor 1 (ARF1), found in Bos taurus (Bovine).